A 102-amino-acid polypeptide reads, in one-letter code: RNA-binding protein Hfq (102 aa).

Positions 9 to 68 constitute a Sm domain; that stretch reads DPFLNALRRERVPVSIYLVNGIKLQGQIESFDQFVILLKNTVSQMVYKHAISTVVPSRPV. The tract at residues 63–102 is disordered; sequence VPSRPVSHHSNNAGGSTSSNYHHGSSAQNTSAQQDSEENE. The span at 70–96 shows a compositional bias: polar residues; sequence HHSNNAGGSTSSNYHHGSSAQNTSAQQ.

It belongs to the Hfq family. As to quaternary structure, homohexamer.

Functionally, RNA chaperone that binds small regulatory RNA (sRNAs) and mRNAs to facilitate mRNA translational regulation in response to envelope stress, environmental stress and changes in metabolite concentrations. Also binds with high specificity to tRNAs. The chain is RNA-binding protein Hfq from Escherichia coli O17:K52:H18 (strain UMN026 / ExPEC).